Reading from the N-terminus, the 194-residue chain is Peptidyl-tRNA hydrolase (194 aa).

Tyr-16 is a binding site for tRNA. Catalysis depends on His-21, which acts as the Proton acceptor. Residues Phe-67, Asn-69, and Asn-115 each coordinate tRNA.

It belongs to the PTH family. In terms of assembly, monomer.

It is found in the cytoplasm. The enzyme catalyses an N-acyl-L-alpha-aminoacyl-tRNA + H2O = an N-acyl-L-amino acid + a tRNA + H(+). In terms of biological role, hydrolyzes ribosome-free peptidyl-tRNAs (with 1 or more amino acids incorporated), which drop off the ribosome during protein synthesis, or as a result of ribosome stalling. Its function is as follows. Catalyzes the release of premature peptidyl moieties from peptidyl-tRNA molecules trapped in stalled 50S ribosomal subunits, and thus maintains levels of free tRNAs and 50S ribosomes. The chain is Peptidyl-tRNA hydrolase from Colwellia psychrerythraea (strain 34H / ATCC BAA-681) (Vibrio psychroerythus).